Reading from the N-terminus, the 162-residue chain is Endoribonuclease YbeY (162 aa).

Zn(2+)-binding residues include histidine 126, histidine 130, and histidine 136.

This sequence belongs to the endoribonuclease YbeY family. Zn(2+) is required as a cofactor.

The protein resides in the cytoplasm. Single strand-specific metallo-endoribonuclease involved in late-stage 70S ribosome quality control and in maturation of the 3' terminus of the 16S rRNA. This Fusobacterium nucleatum subsp. nucleatum (strain ATCC 25586 / DSM 15643 / BCRC 10681 / CIP 101130 / JCM 8532 / KCTC 2640 / LMG 13131 / VPI 4355) protein is Endoribonuclease YbeY.